The following is a 675-amino-acid chain: Alpha-1,4-glucan:maltose-1-phosphate maltosyltransferase 1 (675 aa).

Alpha-maltose 1-phosphate-binding residues include K264, Q324, and D359. Catalysis depends on D394, which acts as the Nucleophile. Residue N395 participates in alpha-maltose 1-phosphate binding. The active-site Proton donor is the E423. Position 534-535 (534-535) interacts with alpha-maltose 1-phosphate; sequence KY.

This sequence belongs to the glycosyl hydrolase 13 family. GlgE subfamily. Homodimer.

It catalyses the reaction alpha-maltose 1-phosphate + [(1-&gt;4)-alpha-D-glucosyl](n) = [(1-&gt;4)-alpha-D-glucosyl](n+2) + phosphate. Is competitively inhibited by alpha-, beta- and gamma-cyclodextrins (cyclic maltooligosaccharides), unlike GlgE from M.tuberculosis. Its function is as follows. Maltosyltransferase that uses maltose 1-phosphate (M1P) as the sugar donor to elongate linear or branched alpha-(1-&gt;4)-glucans. Maltooligosaccharides with a degree of polymerization (DP) superior or equal to 4 are efficient acceptors, with DP6 being optimal in the GlgE-catalyzed polymerization with M1P. Is specific for the alpha-anomer of M1P as substrate, since the beta-anomer of M1P gives no activity. Alpha-D-glucose 1-phosphate cannot serve as a donor substrate, but alpha-maltosyl fluoride is an efficient donor in vitro. Exhibits an alpha-retaining catalytic mechanism, with evidence that maltooligosaccharide acceptors are extended at their non-reducing ends. Is also able to catalyze the reverse reaction in vitro, releasing M1P from glycogen or maltoheptaose in the presence of inorganic phosphate. Also catalyzes disproportionation reactions through maltosyl transfer between maltooligosaccharides. Is probably involved in a branched alpha-glucan biosynthetic pathway from trehalose, together with TreS, Mak and GlgB. This chain is Alpha-1,4-glucan:maltose-1-phosphate maltosyltransferase 1 (glgE1), found in Streptomyces coelicolor (strain ATCC BAA-471 / A3(2) / M145).